The primary structure comprises 932 residues: Eukaryotic translation initiation factor 3 subunit A (932 aa).

One can recognise a PCI domain in the interval 309-492 (KPATANFVIL…NSISFSSDLF (184 aa)). Phosphoserine is present on residues Ser-374 and Ser-501. Residues 537–862 (LRKQQAEAAY…DEEISRKLAE (326 aa)) are a coiled coil. Over residues 793–865 (AEEEAARAAE…ISRKLAEKAA (73 aa)) the composition is skewed to basic and acidic residues. Positions 793 to 932 (AEEEAARAAE…PPSRRNQQQQ (140 aa)) are disordered. Phosphoserine is present on residues Ser-874, Ser-875, and Ser-877. Positions 877-893 (SPGAWRRGGASAGGVSR) are enriched in low complexity.

Belongs to the eIF-3 subunit A family. In terms of assembly, component of the eukaryotic translation initiation factor 3 (eIF-3) complex. The eIF-3 complex appears to include tif32/eif3a, SPAC25G10.08/eif3b, tif33/eif3c, SPBC4C3.07/eif3f, tif35/eif3g and sum1/eif3i. This set of common subunits may also associate exclusively with either moe1/eif3d and int6/eif3e, or with SPAC821.05/eif3h and SPAC1751.03/eif3m. The eIF-3 complex may also include SPAC3A12.13c/eif3j.

Its subcellular location is the cytoplasm. RNA-binding component of the eukaryotic translation initiation factor 3 (eIF-3) complex, which is involved in protein synthesis of a specialized repertoire of mRNAs and, together with other initiation factors, stimulates binding of mRNA and methionyl-tRNAi to the 40S ribosome. The eIF-3 complex specifically targets and initiates translation of a subset of mRNAs involved in cell proliferation. The protein is Eukaryotic translation initiation factor 3 subunit A (tif32) of Schizosaccharomyces pombe (strain 972 / ATCC 24843) (Fission yeast).